The chain runs to 472 residues: L-aspartate oxidase (472 aa).

Residues 7-10 (SGIA), Ser29, 36-37 (ST), 42-43 (GG), and Asp191 contribute to the FAD site. The active-site Proton donor/acceptor is the Arg257. FAD contacts are provided by residues Glu337 and 353 to 354 (SL).

It belongs to the FAD-dependent oxidoreductase 2 family. NadB subfamily. As to quaternary structure, monomer. It depends on FAD as a cofactor.

The protein localises to the cytoplasm. The catalysed reaction is L-aspartate + O2 = iminosuccinate + H2O2. The protein operates within cofactor biosynthesis; NAD(+) biosynthesis; iminoaspartate from L-aspartate (oxidase route): step 1/1. Functionally, catalyzes the oxidation of L-aspartate to iminoaspartate, the first step in the de novo biosynthesis of NAD(+). Can also use L-asparagine, but not L-phenylalanine, L-glutamate, glycine, L-proline, L-alanine and D-aspartate. The chain is L-aspartate oxidase from Sulfurisphaera tokodaii (strain DSM 16993 / JCM 10545 / NBRC 100140 / 7) (Sulfolobus tokodaii).